The following is a 412-amino-acid chain: Argininosuccinate synthase (412 aa).

Residues 11–19 (AYSGGLDTS) and A37 each bind ATP. The L-citrulline site is built by Y88 and S93. 116 to 124 (SHGATGKGN) serves as a coordination point for ATP. T120, N124, and D125 together coordinate L-aspartate. N124 contacts L-citrulline. Residues R128, S181, S190, E271, and Y283 each contribute to the L-citrulline site.

The protein belongs to the argininosuccinate synthase family. Homotetramer.

Its subcellular location is the cytoplasm. The protein resides in the cytosol. The enzyme catalyses L-citrulline + L-aspartate + ATP = 2-(N(omega)-L-arginino)succinate + AMP + diphosphate + H(+). The protein operates within amino-acid biosynthesis; L-arginine biosynthesis; L-arginine from L-ornithine and carbamoyl phosphate: step 2/3. It participates in nitrogen metabolism; urea cycle; (N(omega)-L-arginino)succinate from L-aspartate and L-citrulline: step 1/1. In terms of biological role, one of the enzymes of the urea cycle, the metabolic pathway transforming neurotoxic amonia produced by protein catabolism into inocuous urea in the liver of ureotelic animals. Catalyzes the formation of arginosuccinate from aspartate, citrulline and ATP and together with ASL it is responsible for the biosynthesis of arginine in most body tissues. The polypeptide is Argininosuccinate synthase (Xenopus tropicalis (Western clawed frog)).